Here is a 202-residue protein sequence, read N- to C-terminus: Small ribosomal subunit protein uS4 (202 aa).

A disordered region spans residues 23-42 (RKAARRSYPPGQHGQARRKR). An S4 RNA-binding domain is found at 90–154 (MRLDNLVFRL…SRKLVTANLE (65 aa)).

The protein belongs to the universal ribosomal protein uS4 family. Part of the 30S ribosomal subunit. Contacts protein S5. The interaction surface between S4 and S5 is involved in control of translational fidelity.

In terms of biological role, one of the primary rRNA binding proteins, it binds directly to 16S rRNA where it nucleates assembly of the body of the 30S subunit. With S5 and S12 plays an important role in translational accuracy. The protein is Small ribosomal subunit protein uS4 of Synechococcus elongatus (strain ATCC 33912 / PCC 7942 / FACHB-805) (Anacystis nidulans R2).